Reading from the N-terminus, the 231-residue chain is Endo-1,4-beta-xylanase A (231 aa).

An N-terminal signal peptide occupies residues 1–19 (MVSFKSLLVAVSALTGALA). N-linked (GlcNAc...) asparagine glycosylation occurs at asparagine 32. One can recognise a GH11 domain in the interval 41–229 (QVTGNSEGYH…SSGSSSIYVQ (189 aa)). The Nucleophile role is filled by glutamate 125. Residue glutamate 216 is the Proton donor of the active site.

It belongs to the glycosyl hydrolase 11 (cellulase G) family.

It localises to the secreted. The enzyme catalyses Endohydrolysis of (1-&gt;4)-beta-D-xylosidic linkages in xylans.. The protein operates within glycan degradation; xylan degradation. Inhibited by the proteinaceous endoxylanase inhibitor I from T.aestivum (TAXI-I). Its function is as follows. Endo-1,4-beta-xylanase involved in the hydrolysis of xylan, a major structural heterogeneous polysaccharide found in plant biomass representing the second most abundant polysaccharide in the biosphere, after cellulose. Plays an important role in causing fusarium head blight (FHB) on cereal crops. This is Endo-1,4-beta-xylanase A (XYLA) from Gibberella zeae (strain ATCC MYA-4620 / CBS 123657 / FGSC 9075 / NRRL 31084 / PH-1) (Wheat head blight fungus).